Consider the following 147-residue polypeptide: Deoxyuridine 5'-triphosphate nucleotidohydrolase (147 aa).

Substrate is bound by residues 67-69 (RSG), Asn80, and 84-86 (TID).

It belongs to the dUTPase family. The cofactor is Mg(2+).

The catalysed reaction is dUTP + H2O = dUMP + diphosphate + H(+). Its pathway is pyrimidine metabolism; dUMP biosynthesis; dUMP from dCTP (dUTP route): step 2/2. Functionally, this enzyme is involved in nucleotide metabolism: it produces dUMP, the immediate precursor of thymidine nucleotides and it decreases the intracellular concentration of dUTP so that uracil cannot be incorporated into DNA. This is Deoxyuridine 5'-triphosphate nucleotidohydrolase from Anaplasma marginale (strain St. Maries).